Reading from the N-terminus, the 391-residue chain is tRNA (cytosine(38)-C(5))-methyltransferase (391 aa).

One can recognise an SAM-dependent MTase C5-type domain in the interval 4 to 391; the sequence is LRALELYSGI…VAKLIKILCD (388 aa). S-adenosyl-L-methionine contacts are provided by residues 13–15, D34, 57–58, and S76; these read IGG and IE. Residue C79 is part of the active site. S376 is an S-adenosyl-L-methionine binding site.

This sequence belongs to the class I-like SAM-binding methyltransferase superfamily. C5-methyltransferase family.

It is found in the cytoplasm. It carries out the reaction cytidine(38) in tRNA + S-adenosyl-L-methionine = 5-methylcytidine(38) in tRNA + S-adenosyl-L-homocysteine + H(+). In terms of biological role, specifically methylates cytosine 38 in the anticodon loop of tRNA(Asp). Has higher activity on tRNA(Asp) modified with queuosine at position 34. The sequence is that of tRNA (cytosine(38)-C(5))-methyltransferase (TRDMT1) from Bos taurus (Bovine).